We begin with the raw amino-acid sequence, 159 residues long: MAAKVDIFAANLPNLTDEEMDMCRKAFAMFDKDGSGTIDTKELRTALSALGQNPTEEDMFVMISQVDQDGSRCIEFKEFVRVIQINKQMSAKDADEADTLDAFVALGGNLDKTGRILVDKLRSICEEFELTVNVDRLVKDADRDLNGFLSYDEFRALLS.

EF-hand domains follow at residues 18 to 53 (EEMD…LGQN), 54 to 89 (PTEE…NKQM), and 129 to 159 (ELTV…ALLS). Ca(2+)-binding residues include aspartate 31, aspartate 33, serine 35, threonine 37, glutamate 42, aspartate 67, aspartate 69, serine 71, cysteine 73, and glutamate 78.

As to quaternary structure, consists of at least 3 heavy chains (alpha, beta and gamma), 2 intermediate chains and 8 light chains.

It localises to the cell projection. Its subcellular location is the cilium. The protein resides in the flagellum. Its function is as follows. May be involved in the calcium-mediated regulation of dynein motor function. Binds 1 mole of calcium. This chain is Dynein 18 kDa light chain, flagellar outer arm, found in Chlamydomonas reinhardtii (Chlamydomonas smithii).